We begin with the raw amino-acid sequence, 174 residues long: von Hippel-Lindau tumor suppressor homolog (174 aa).

Belongs to the VHL family. As to quaternary structure, interacts with hif-1 (hydroxylated on 'Pro-621'); the interaction induces hif-1 degradation. May be a component of the cullin E3 ubiquitin ligase complex.

The protein operates within protein modification; protein ubiquitination. Its function is as follows. Involved in the response to variation in environmental oxygen levels by targeting the hypoxia-inducible transcription factor hif-1 for proteasomal degradation when oxygen levels are normal (around 20%). By regulating hif-1 expression, plays a role in iron homeostasis, aging, heat acclimation and progeny size. Mediates resistance to enteropathogenic E.coli. Mediates susceptibility to B.thuringiensis pore-forming toxins. Not involved in P.aeruginosa susceptibility. The polypeptide is von Hippel-Lindau tumor suppressor homolog (Caenorhabditis elegans).